Here is a 304-residue protein sequence, read N- to C-terminus: MQADTIKQEIRRLLKERNAVLLAHNYMRDEVQEIADITGDSLGLSQEAAKTAADVIVFCGVHFMAESASILSPHKTVLLPRRDAGCPMADMVTVEGLLELKARHPGVPVVTYVNSSAAVKAVSDICCTSANAVKVVNSLPDREVIFVPDRNLGQFVAKQSDKAFHFWDGYCPTHERLKADVVARLKAENPDALFICHPECNPAVVALADHACSTSGMYDYCRKSPAKRFIIGTEAGILYKLRLENPDKEFILASPALVCPNMKLTSLEDILDALTTMAPVVQVPEDIRVQAKRALDRMIAIPRD.

2 residues coordinate iminosuccinate: H24 and S41. Position 86 (C86) interacts with [4Fe-4S] cluster. Iminosuccinate contacts are provided by residues 112–114 and S129; that span reads YVN. C171 is a [4Fe-4S] cluster binding site. Iminosuccinate contacts are provided by residues 197–199 and T214; that span reads HPE. C259 contacts [4Fe-4S] cluster.

The protein belongs to the quinolinate synthase family. Type 2 subfamily. The cofactor is [4Fe-4S] cluster.

It localises to the cytoplasm. It catalyses the reaction iminosuccinate + dihydroxyacetone phosphate = quinolinate + phosphate + 2 H2O + H(+). It functions in the pathway cofactor biosynthesis; NAD(+) biosynthesis; quinolinate from iminoaspartate: step 1/1. In terms of biological role, catalyzes the condensation of iminoaspartate with dihydroxyacetone phosphate to form quinolinate. The polypeptide is Quinolinate synthase (Geobacter metallireducens (strain ATCC 53774 / DSM 7210 / GS-15)).